A 334-amino-acid polypeptide reads, in one-letter code: Holliday junction branch migration complex subunit RuvB (334 aa).

The segment at 4-184 (ADRLIQPQLQ…FGIPLRLEFY (181 aa)) is large ATPase domain (RuvB-L). ATP-binding positions include Arg-24, Gly-65, Lys-68, Thr-69, Thr-70, 131 to 133 (EDY), Arg-174, Tyr-184, and Arg-221. Thr-69 contacts Mg(2+). Positions 185-255 (NIKDLSTIVT…VADHALDLLD (71 aa)) are small ATPAse domain (RuvB-S). A head domain (RuvB-H) region spans residues 258 to 334 (NEGFDYMDRK…YQHFQLIKPE (77 aa)). The DNA site is built by Arg-294, Arg-313, and Arg-318.

Belongs to the RuvB family. As to quaternary structure, homohexamer. Forms an RuvA(8)-RuvB(12)-Holliday junction (HJ) complex. HJ DNA is sandwiched between 2 RuvA tetramers; dsDNA enters through RuvA and exits via RuvB. An RuvB hexamer assembles on each DNA strand where it exits the tetramer. Each RuvB hexamer is contacted by two RuvA subunits (via domain III) on 2 adjacent RuvB subunits; this complex drives branch migration. In the full resolvosome a probable DNA-RuvA(4)-RuvB(12)-RuvC(2) complex forms which resolves the HJ.

The protein resides in the cytoplasm. It catalyses the reaction ATP + H2O = ADP + phosphate + H(+). Its function is as follows. The RuvA-RuvB-RuvC complex processes Holliday junction (HJ) DNA during genetic recombination and DNA repair, while the RuvA-RuvB complex plays an important role in the rescue of blocked DNA replication forks via replication fork reversal (RFR). RuvA specifically binds to HJ cruciform DNA, conferring on it an open structure. The RuvB hexamer acts as an ATP-dependent pump, pulling dsDNA into and through the RuvAB complex. RuvB forms 2 homohexamers on either side of HJ DNA bound by 1 or 2 RuvA tetramers; 4 subunits per hexamer contact DNA at a time. Coordinated motions by a converter formed by DNA-disengaged RuvB subunits stimulates ATP hydrolysis and nucleotide exchange. Immobilization of the converter enables RuvB to convert the ATP-contained energy into a lever motion, pulling 2 nucleotides of DNA out of the RuvA tetramer per ATP hydrolyzed, thus driving DNA branch migration. The RuvB motors rotate together with the DNA substrate, which together with the progressing nucleotide cycle form the mechanistic basis for DNA recombination by continuous HJ branch migration. Branch migration allows RuvC to scan DNA until it finds its consensus sequence, where it cleaves and resolves cruciform DNA. This Shewanella sp. (strain W3-18-1) protein is Holliday junction branch migration complex subunit RuvB.